Consider the following 320-residue polypeptide: Glycerol-3-phosphate dehydrogenase [NAD(P)+] (320 aa).

Residues phenylalanine 11, arginine 30, and lysine 102 each coordinate NADPH. Sn-glycerol 3-phosphate is bound by residues lysine 102, glycine 130, and serine 132. NADPH is bound at residue alanine 134. Sn-glycerol 3-phosphate contacts are provided by lysine 185, aspartate 238, serine 248, arginine 249, and asparagine 250. Lysine 185 acts as the Proton acceptor in catalysis. Arginine 249 is an NADPH binding site. Residue glutamate 270 coordinates NADPH.

Belongs to the NAD-dependent glycerol-3-phosphate dehydrogenase family.

It is found in the cytoplasm. It catalyses the reaction sn-glycerol 3-phosphate + NAD(+) = dihydroxyacetone phosphate + NADH + H(+). The catalysed reaction is sn-glycerol 3-phosphate + NADP(+) = dihydroxyacetone phosphate + NADPH + H(+). The protein operates within membrane lipid metabolism; glycerophospholipid metabolism. Catalyzes the reduction of the glycolytic intermediate dihydroxyacetone phosphate (DHAP) to sn-glycerol 3-phosphate (G3P), the key precursor for phospholipid synthesis. This chain is Glycerol-3-phosphate dehydrogenase [NAD(P)+], found in Ruegeria sp. (strain TM1040) (Silicibacter sp.).